The chain runs to 343 residues: Single-pass membrane and coiled-coil domain-containing protein 2 (343 aa).

The span at 86–99 (EHDQDLSKQDKQET) shows a compositional bias: basic and acidic residues. Residues 86–108 (EHDQDLSKQDKQETDVDEDPQAS) form a disordered region. A coiled-coil region spans residues 152–238 (TEKIDNIIKK…SAKLRMYQME (87 aa)). A helical transmembrane segment spans residues 284 to 304 (IFIMFDVLTVTGLLCYILFFG).

The protein resides in the membrane. This Homo sapiens (Human) protein is Single-pass membrane and coiled-coil domain-containing protein 2 (SMCO2).